A 479-amino-acid polypeptide reads, in one-letter code: Citrate synthase, mitochondrial (479 aa).

A mitochondrion-targeting transit peptide spans 1–37; that stretch reads MSAILSTTSKSFLSRGSTRQCQNMQKALFALLNARHY. Active-site residues include histidine 312, histidine 358, and aspartate 413. A Phosphoserine modification is found at serine 462.

This sequence belongs to the citrate synthase family. As to quaternary structure, monomer and homodimer. Exists as an inactive monomer when phosphorylated. Homodimerization is dependent on dephosphorylation of Ser-462 by PTC7 and is required for activity. Post-translationally, phosphorylation at Ser-462. Dephosphorylated at Ser-462 by PTC7.

It localises to the mitochondrion matrix. The catalysed reaction is oxaloacetate + acetyl-CoA + H2O = citrate + CoA + H(+). It functions in the pathway carbohydrate metabolism; tricarboxylic acid cycle; isocitrate from oxaloacetate: step 1/2. With respect to regulation, phosphorylation at Ser-462 inhibits catalytic activity. Dephosphorylation at Ser-462 by PTC7 enhances catalytic activity. Specific citrate synthase with catalytic activity only with acetyl-CoA. The protein is Citrate synthase, mitochondrial of Saccharomyces cerevisiae (strain ATCC 204508 / S288c) (Baker's yeast).